The following is a 210-amino-acid chain: Small heat shock protein hspG6 (210 aa).

In terms of domain architecture, sHSP spans 34–210; the sequence is KTIIDKLPPM…YSNTIKININ (177 aa). The interval 93–151 is disordered; it reads VIEKSTSSSTLDSKEDEPSIEEFEDDIKPKSKSDNTTVSTTTTATTKENKEDENKTKST. Residues 126 to 138 are compositionally biased toward low complexity; that stretch reads DNTTVSTTTTATT. Residues 139 to 151 are compositionally biased toward basic and acidic residues; that stretch reads KENKEDENKTKST.

It belongs to the small heat shock protein (HSP20) family.

This is Small heat shock protein hspG6 (hspG6) from Dictyostelium discoideum (Social amoeba).